Here is a 542-residue protein sequence, read N- to C-terminus: CTP synthase (542 aa).

The segment at 1 to 265 is amidoligase domain; sequence MARYVFITGG…DNEVLAAFGI (265 aa). Residue Ser13 participates in CTP binding. UTP is bound at residue Ser13. ATP is bound by residues 14 to 19 and Asp71; that span reads SLGKGI. Mg(2+) contacts are provided by Asp71 and Glu139. CTP contacts are provided by residues 146 to 148, 186 to 191, and Lys222; these read DIE and KTKPTQ. UTP is bound by residues 186-191 and Lys222; that span reads KTKPTQ. Residues 291–541 enclose the Glutamine amidotransferase type-1 domain; sequence TIAIVGKYTG…IEAALEQSRL (251 aa). Gly353 contacts L-glutamine. The Nucleophile; for glutamine hydrolysis role is filled by Cys380. Residues 381-384, Glu404, and Arg469 each bind L-glutamine; that span reads FGMQ. Residues His514 and Glu516 contribute to the active site.

This sequence belongs to the CTP synthase family. Homotetramer.

It catalyses the reaction UTP + L-glutamine + ATP + H2O = CTP + L-glutamate + ADP + phosphate + 2 H(+). It carries out the reaction L-glutamine + H2O = L-glutamate + NH4(+). The enzyme catalyses UTP + NH4(+) + ATP = CTP + ADP + phosphate + 2 H(+). It functions in the pathway pyrimidine metabolism; CTP biosynthesis via de novo pathway; CTP from UDP: step 2/2. Allosterically activated by GTP, when glutamine is the substrate; GTP has no effect on the reaction when ammonia is the substrate. The allosteric effector GTP functions by stabilizing the protein conformation that binds the tetrahedral intermediate(s) formed during glutamine hydrolysis. Inhibited by the product CTP, via allosteric rather than competitive inhibition. In terms of biological role, catalyzes the ATP-dependent amination of UTP to CTP with either L-glutamine or ammonia as the source of nitrogen. Regulates intracellular CTP levels through interactions with the four ribonucleotide triphosphates. The protein is CTP synthase of Rhizobium meliloti (strain 1021) (Ensifer meliloti).